Reading from the N-terminus, the 180-residue chain is ATP-dependent protease subunit HslV (180 aa).

Residue threonine 8 is part of the active site. Na(+)-binding residues include alanine 165, cysteine 168, and threonine 171.

Belongs to the peptidase T1B family. HslV subfamily. A double ring-shaped homohexamer of HslV is capped on each side by a ring-shaped HslU homohexamer. The assembly of the HslU/HslV complex is dependent on binding of ATP.

It localises to the cytoplasm. The catalysed reaction is ATP-dependent cleavage of peptide bonds with broad specificity.. Its activity is regulated as follows. Allosterically activated by HslU binding. Protease subunit of a proteasome-like degradation complex believed to be a general protein degrading machinery. This Macrococcus caseolyticus (strain JCSC5402) (Macrococcoides caseolyticum) protein is ATP-dependent protease subunit HslV.